The chain runs to 364 residues: Dual-specificity RNA methyltransferase RlmN (364 aa).

E91 acts as the Proton acceptor in catalysis. Residues 97-333 (ESDRGTLCIS…VTVRKTRGDD (237 aa)) enclose the Radical SAM core domain. A disulfide bridge links C104 with C338. Positions 111, 115, and 118 each coordinate [4Fe-4S] cluster. Residues 164 to 165 (GE), S196, 218 to 220 (SLH), and N295 each bind S-adenosyl-L-methionine. C338 (S-methylcysteine intermediate) is an active-site residue.

The protein belongs to the radical SAM superfamily. RlmN family. [4Fe-4S] cluster serves as cofactor.

It is found in the cytoplasm. It carries out the reaction adenosine(2503) in 23S rRNA + 2 reduced [2Fe-2S]-[ferredoxin] + 2 S-adenosyl-L-methionine = 2-methyladenosine(2503) in 23S rRNA + 5'-deoxyadenosine + L-methionine + 2 oxidized [2Fe-2S]-[ferredoxin] + S-adenosyl-L-homocysteine. It catalyses the reaction adenosine(37) in tRNA + 2 reduced [2Fe-2S]-[ferredoxin] + 2 S-adenosyl-L-methionine = 2-methyladenosine(37) in tRNA + 5'-deoxyadenosine + L-methionine + 2 oxidized [2Fe-2S]-[ferredoxin] + S-adenosyl-L-homocysteine. Functionally, specifically methylates position 2 of adenine 2503 in 23S rRNA and position 2 of adenine 37 in tRNAs. m2A2503 modification seems to play a crucial role in the proofreading step occurring at the peptidyl transferase center and thus would serve to optimize ribosomal fidelity. The sequence is that of Dual-specificity RNA methyltransferase RlmN from Neisseria meningitidis serogroup B (strain ATCC BAA-335 / MC58).